The primary structure comprises 486 residues: MVIAGDGKAGAKKSRWSAGVTPYAEMGYYNADYVPKDTDILAAFRFVPQEGVEPIEAGAAVAGESSTATWTVVWTDRLTAYEHYQGKCFRVEPVPGTNQYIAFIAYDLDLFEEGSIANMSSSIIGNVFGFKALKSLRLEDLRIPPHYVKTFQGPAHGIMMEREYLNKYGRPLLGATVKPKLGLSAKNYGRVVYEALRGGLDFTKDDENINSQPFMRWRDRWLFCMEAVNKAMAETGEIKGHYLNVTAATMEEMYERAEFAKELGSVIIMVDLTAGFTAIQSMAKWCRKNGVLLHLHRAGHSTYTRQKIHGVNFRVIAKWMRLAGVDHIHAGTVVGKLEGDLHSVQGYYKTLRTQYTEADPLLGLYFEQDWASMPGVMPVASGGIHAGQMHLLLSYLGEDTILQFGGGTIGHPDGIAAGATANRVAVEVMVQARNEGKDILREGPEILEKACRWSPALAKAIETWKDISFEFESTDVPDAVAMPTIA.

N126 and T176 together coordinate substrate. K178 functions as the Proton acceptor in the catalytic mechanism. A substrate-binding site is contributed by K180. The Mg(2+) site is built by K204, D206, and E207. K204 is modified (N6-carboxylysine). The Proton acceptor role is filled by H296. Substrate is bound by residues R297, H329, and S381.

This sequence belongs to the RuBisCO large chain family. Type I subfamily. Heterohexadecamer of 8 large chains and 8 small chains. The cofactor is Mg(2+).

The enzyme catalyses 2 (2R)-3-phosphoglycerate + 2 H(+) = D-ribulose 1,5-bisphosphate + CO2 + H2O. It carries out the reaction D-ribulose 1,5-bisphosphate + O2 = 2-phosphoglycolate + (2R)-3-phosphoglycerate + 2 H(+). Its function is as follows. RuBisCO catalyzes two reactions: the carboxylation of D-ribulose 1,5-bisphosphate, the primary event in carbon dioxide fixation, as well as the oxidative fragmentation of the pentose substrate. Both reactions occur simultaneously and in competition at the same active site. This Methylacidiphilum infernorum (isolate V4) (Methylokorus infernorum (strain V4)) protein is Ribulose bisphosphate carboxylase large chain.